Reading from the N-terminus, the 743-residue chain is F-box protein COS111 (743 aa).

Positions 145-191 constitute an F-box domain; it reads ELHIKNLPVEILDYIFYLVDDNLDYKSCMYTCKLFYFLAKPYYYENL. 2 disordered regions span residues 224 to 257 and 311 to 330; these read IKPG…DPQY and FSNV…SSST. Over residues 229–248 the composition is skewed to acidic residues; the sequence is DEDEQEEGQEENAENGEEEN.

F-box protein probably involved in ubiquitin conjugation pathway. This Candida albicans (strain SC5314 / ATCC MYA-2876) (Yeast) protein is F-box protein COS111 (COS111).